Consider the following 364-residue polypeptide: Putative zinc metalloprotease all3971 (364 aa).

Histidine 17 contacts Zn(2+). The active site involves glutamate 18. Histidine 21 is a Zn(2+) binding site. Helical transmembrane passes span 92-114 (AIVISAGVIANLIFAYMLLLAQV), 281-303 (LFFFAALISINLAVINILPLPAL), and 329-346 (VMQTGLVLLLGLGIFLIV). In terms of domain architecture, PDZ spans 103–188 (LIFAYMLLLA…KSIQLTVARG (86 aa)).

It belongs to the peptidase M50B family. Zn(2+) serves as cofactor.

Its subcellular location is the cell inner membrane. The protein is Putative zinc metalloprotease all3971 of Nostoc sp. (strain PCC 7120 / SAG 25.82 / UTEX 2576).